Consider the following 353-residue polypeptide: Small ribosomal subunit protein uS2 (353 aa).

The tract at residues 256–353 (DTDEQSSAAN…TPAESTDEQA (98 aa)) is disordered. 2 stretches are compositionally biased toward low complexity: residues 263–311 (AANT…AEAP) and 321–339 (ESATPAEAEVEAESATPAE). Residues 340–353 (AEAETPAESTDEQA) are compositionally biased toward acidic residues.

The protein belongs to the universal ribosomal protein uS2 family.

The chain is Small ribosomal subunit protein uS2 from Beutenbergia cavernae (strain ATCC BAA-8 / DSM 12333 / CCUG 43141 / JCM 11478 / NBRC 16432 / NCIMB 13614 / HKI 0122).